A 413-amino-acid chain; its full sequence is uncharacterized protein (413 aa).

2 disordered regions span residues 108-158 (ESVP…SKIS) and 232-257 (DRLG…RLGA). The residue at position 115 (Ser-115) is a Phosphoserine. Positions 127–139 (SAASRMIANSLNH) are enriched in polar residues. Ser-141 is modified (phosphoserine). Lys-239 participates in a covalent cross-link: Glycyl lysine isopeptide (Lys-Gly) (interchain with G-Cter in SUMO2). Ser-269 and Ser-296 each carry phosphoserine. Residues 290–336 (RGPTKASAQPALTVKAKAASSATSTATTPKLRRLALPSRPGLQKKPD) form a disordered region. Residues 302-318 (TVKAKAASSATSTATTP) show a composition bias toward low complexity. Ser-342 carries the post-translational modification Phosphoserine.

This is an uncharacterized protein from Mus musculus (Mouse).